Consider the following 397-residue polypeptide: S-adenosylmethionine synthase (397 aa).

H17 is a binding site for ATP. Position 19 (D19) interacts with Mg(2+). E45 provides a ligand contact to K(+). E58 and Q101 together coordinate L-methionine. A flexible loop region spans residues 101-111; it reads QSPDIAQGVDK. Residues 176–178, 243–244, D252, 258–259, and K279 each bind ATP; these read DGK, RF, and RK. L-methionine is bound at residue D252. K283 contributes to the L-methionine binding site.

Belongs to the AdoMet synthase family. In terms of assembly, homotetramer; dimer of dimers. It depends on Mg(2+) as a cofactor. Requires K(+) as cofactor.

The protein localises to the cytoplasm. It catalyses the reaction L-methionine + ATP + H2O = S-adenosyl-L-methionine + phosphate + diphosphate. It participates in amino-acid biosynthesis; S-adenosyl-L-methionine biosynthesis; S-adenosyl-L-methionine from L-methionine: step 1/1. Catalyzes the formation of S-adenosylmethionine (AdoMet) from methionine and ATP. The overall synthetic reaction is composed of two sequential steps, AdoMet formation and the subsequent tripolyphosphate hydrolysis which occurs prior to release of AdoMet from the enzyme. This chain is S-adenosylmethionine synthase, found in Staphylococcus aureus (strain USA300).